Reading from the N-terminus, the 472-residue chain is Trigger factor (472 aa).

The 88-residue stretch at 174-261 (GDIAVLGFKG…LKDLKTRELP (88 aa)) folds into the PPIase FKBP-type domain. Residues 430–472 (ENSTLTEQAPAADDADDAEKPAAKKKPAAKKKTPAKSKTDAEA) are disordered. Basic residues predominate over residues 452–464 (AKKKPAAKKKTPA).

It belongs to the FKBP-type PPIase family. Tig subfamily.

It localises to the cytoplasm. The enzyme catalyses [protein]-peptidylproline (omega=180) = [protein]-peptidylproline (omega=0). Involved in protein export. Acts as a chaperone by maintaining the newly synthesized protein in an open conformation. Functions as a peptidyl-prolyl cis-trans isomerase. The polypeptide is Trigger factor (Parasynechococcus marenigrum (strain WH8102)).